We begin with the raw amino-acid sequence, 481 residues long: Phosphatidylinositol 4-kinase type 2-beta (481 aa).

Basic and acidic residues predominate over residues 1–11 (MEDPSEPDRLA). The interval 1–82 (MEDPSEPDRL…VSRSSSAELD (82 aa)) is disordered. Ser-12, Ser-17, and Ser-45 each carry phosphoserine. Positions 53–64 (AGEEGEAGDEEL) are enriched in acidic residues. Residues 120-451 (GIFPERISQG…VQIPCVIVER (332 aa)) form the PI3K/PI4K catalytic domain. The segment at 126 to 132 (ISQGSSG) is G-loop. Residues Ser-133 and Lys-148 each contribute to the ATP site. The tract at residues 153–155 (EPY) is important for substrate binding. The interval 161–174 (KWTKYVHKVCCPCC) is important for interaction with membranes. ATP-binding positions include 257-260 (QLFV) and 271-272 (RK). Residues 264–272 (KEAEYWLRK) form an important for interaction with membranes region. The catalytic loop stretch occupies residues 301 to 309 (RNTDRGNDN). The activation loop stretch occupies residues 342–362 (AIDNGLAFPFKHPDEWRAYPF). Residue Asp-344 coordinates ATP. An important for interaction with membranes region spans residues 357 to 366 (WRAYPFHWAW).

The protein belongs to the PI3/PI4-kinase family. Type II PI4K subfamily. As to expression, widely expressed.

It localises to the cytoplasm. Its subcellular location is the cytosol. It is found in the golgi apparatus membrane. The protein resides in the endoplasmic reticulum membrane. The protein localises to the cell membrane. It localises to the early endosome membrane. The catalysed reaction is a 1,2-diacyl-sn-glycero-3-phospho-(1D-myo-inositol) + ATP = a 1,2-diacyl-sn-glycero-3-phospho-(1D-myo-inositol 4-phosphate) + ADP + H(+). Inhibited by phenylarsine oxide and adenosine. Activation through membrane association is stimulated by active RAC1. Together with PI4K2A and the type III PI4Ks (PIK4CA and PIK4CB) it contributes to the overall PI4-kinase activity of the cell. This contribution may be especially significant in plasma membrane, endosomal and Golgi compartments. The phosphorylation of phosphatidylinositol (PI) to PI4P is the first committed step in the generation of phosphatidylinositol 4,5-bisphosphate (PIP2), a precursor of the second messenger inositol 1,4,5-trisphosphate (InsP3). Contributes to the production of InsP3 in stimulated cells and is likely to be involved in the regulation of vesicular trafficking. This chain is Phosphatidylinositol 4-kinase type 2-beta (PI4K2B), found in Homo sapiens (Human).